Consider the following 123-residue polypeptide: Small ribosomal subunit protein uS12 (123 aa).

Aspartate 89 carries the post-translational modification 3-methylthioaspartic acid.

The protein belongs to the universal ribosomal protein uS12 family. As to quaternary structure, part of the 30S ribosomal subunit. Contacts proteins S8 and S17. May interact with IF1 in the 30S initiation complex.

Functionally, with S4 and S5 plays an important role in translational accuracy. In terms of biological role, interacts with and stabilizes bases of the 16S rRNA that are involved in tRNA selection in the A site and with the mRNA backbone. Located at the interface of the 30S and 50S subunits, it traverses the body of the 30S subunit contacting proteins on the other side and probably holding the rRNA structure together. The combined cluster of proteins S8, S12 and S17 appears to hold together the shoulder and platform of the 30S subunit. The protein is Small ribosomal subunit protein uS12 of Syntrophus aciditrophicus (strain SB).